The sequence spans 466 residues: Argininosuccinate lyase (466 aa).

The protein belongs to the lyase 1 family. Argininosuccinate lyase subfamily.

The protein resides in the cytoplasm. It carries out the reaction 2-(N(omega)-L-arginino)succinate = fumarate + L-arginine. The protein operates within amino-acid biosynthesis; L-arginine biosynthesis; L-arginine from L-ornithine and carbamoyl phosphate: step 3/3. The sequence is that of Argininosuccinate lyase from Brucella canis (strain ATCC 23365 / NCTC 10854 / RM-666).